Here is a 359-residue protein sequence, read N- to C-terminus: Heat-inducible transcription repressor HrcA (359 aa).

The protein belongs to the HrcA family.

Its function is as follows. Negative regulator of class I heat shock genes (grpE-dnaK-dnaJ and groELS operons). Prevents heat-shock induction of these operons. This is Heat-inducible transcription repressor HrcA from Rhizobium meliloti (strain 1021) (Ensifer meliloti).